The following is a 140-amino-acid chain: ATP synthase epsilon chain (140 aa).

It belongs to the ATPase epsilon chain family. As to quaternary structure, F-type ATPases have 2 components, CF(1) - the catalytic core - and CF(0) - the membrane proton channel. CF(1) has five subunits: alpha(3), beta(3), gamma(1), delta(1), epsilon(1). CF(0) has three main subunits: a, b and c.

The protein resides in the cell inner membrane. In terms of biological role, produces ATP from ADP in the presence of a proton gradient across the membrane. The chain is ATP synthase epsilon chain from Vibrio vulnificus (strain CMCP6).